We begin with the raw amino-acid sequence, 168 residues long: Vasopressin-neurophysin 2-copeptin (168 aa).

The first 23 residues, 1–23, serve as a signal peptide directing secretion; the sequence is MLAMMLNTTLSACFLSLLALTSA. Residues C24 and C29 are joined by a disulfide bond. Residue G32 is modified to Glycine amide. 7 cysteine pairs are disulfide-bonded: C45–C89, C48–C62, C56–C79, C63–C69, C96–C108, C102–C120, and C109–C114. The N-linked (GlcNAc...) asparagine glycan is linked to N135.

It belongs to the vasopressin/oxytocin family. As to quaternary structure, interacts with vasopressin receptors V1bR/AVPR1B (Ki=85 pM), V1aR/AVPR1A (Ki=0.6 nM) and V2R/AVPR2 (Ki=4.9 nM). Interacts with oxytocin receptor (OXTR) (Ki=110 nM).

It is found in the secreted. Its function is as follows. Neurophysin 2 specifically binds vasopressin. In terms of biological role, vasopressin has a direct antidiuretic action on the kidney, it also causes vasoconstriction of the peripheral vessels. Acts by binding to vasopressin receptors (V1bR/AVPR1B, V1aR/AVPR1A, and V2R/AVPR2). In Rattus norvegicus (Rat), this protein is Vasopressin-neurophysin 2-copeptin (Avp).